We begin with the raw amino-acid sequence, 299 residues long: Bifunctional protein FolD 1 (299 aa).

Residues 168–170 (GRS), S193, and I234 each bind NADP(+).

This sequence belongs to the tetrahydrofolate dehydrogenase/cyclohydrolase family. In terms of assembly, homodimer.

The catalysed reaction is (6R)-5,10-methylene-5,6,7,8-tetrahydrofolate + NADP(+) = (6R)-5,10-methenyltetrahydrofolate + NADPH. It catalyses the reaction (6R)-5,10-methenyltetrahydrofolate + H2O = (6R)-10-formyltetrahydrofolate + H(+). It functions in the pathway one-carbon metabolism; tetrahydrofolate interconversion. Its function is as follows. Catalyzes the oxidation of 5,10-methylenetetrahydrofolate to 5,10-methenyltetrahydrofolate and then the hydrolysis of 5,10-methenyltetrahydrofolate to 10-formyltetrahydrofolate. This is Bifunctional protein FolD 1 from Rhizobium etli (strain ATCC 51251 / DSM 11541 / JCM 21823 / NBRC 15573 / CFN 42).